The primary structure comprises 416 residues: Cysteate synthase (416 aa).

At lysine 104 the chain carries N6-(pyridoxal phosphate)lysine. Asparagine 130 lines the pyridoxal 5'-phosphate pocket.

This sequence belongs to the threonine synthase family. Cysteate synthase subfamily. As to quaternary structure, homotrimer. It depends on pyridoxal 5'-phosphate as a cofactor.

It carries out the reaction O-phospho-L-serine + sulfite + H(+) = L-cysteate + phosphate. It functions in the pathway cofactor biosynthesis; coenzyme M biosynthesis. In terms of biological role, specifically catalyzes the beta-elimination of phosphate from L-phosphoserine and the beta-addition of sulfite to the dehydroalanine intermediate to produce L-cysteate. This is Cysteate synthase from Methanosarcina barkeri (strain Fusaro / DSM 804).